A 642-amino-acid polypeptide reads, in one-letter code: Glutamyl-tRNA(Gln) amidotransferase subunit E (642 aa).

It belongs to the GatB/GatE family. GatE subfamily. In terms of assembly, heterodimer of GatD and GatE.

It catalyses the reaction L-glutamyl-tRNA(Gln) + L-glutamine + ATP + H2O = L-glutaminyl-tRNA(Gln) + L-glutamate + ADP + phosphate + H(+). Allows the formation of correctly charged Gln-tRNA(Gln) through the transamidation of misacylated Glu-tRNA(Gln) in organisms which lack glutaminyl-tRNA synthetase. The reaction takes place in the presence of glutamine and ATP through an activated gamma-phospho-Glu-tRNA(Gln). The GatDE system is specific for glutamate and does not act on aspartate. This Aeropyrum pernix (strain ATCC 700893 / DSM 11879 / JCM 9820 / NBRC 100138 / K1) protein is Glutamyl-tRNA(Gln) amidotransferase subunit E.